The chain runs to 184 residues: ATP synthase subunit b, chloroplastic (184 aa).

A helical membrane pass occupies residues 27-49 (LATNPINLSVVLGVLIFFGKGVL).

It belongs to the ATPase B chain family. In terms of assembly, F-type ATPases have 2 components, F(1) - the catalytic core - and F(0) - the membrane proton channel. F(1) has five subunits: alpha(3), beta(3), gamma(1), delta(1), epsilon(1). F(0) has four main subunits: a(1), b(1), b'(1) and c(10-14). The alpha and beta chains form an alternating ring which encloses part of the gamma chain. F(1) is attached to F(0) by a central stalk formed by the gamma and epsilon chains, while a peripheral stalk is formed by the delta, b and b' chains.

Its subcellular location is the plastid. The protein localises to the chloroplast thylakoid membrane. Its function is as follows. F(1)F(0) ATP synthase produces ATP from ADP in the presence of a proton or sodium gradient. F-type ATPases consist of two structural domains, F(1) containing the extramembraneous catalytic core and F(0) containing the membrane proton channel, linked together by a central stalk and a peripheral stalk. During catalysis, ATP synthesis in the catalytic domain of F(1) is coupled via a rotary mechanism of the central stalk subunits to proton translocation. Component of the F(0) channel, it forms part of the peripheral stalk, linking F(1) to F(0). The sequence is that of ATP synthase subunit b, chloroplastic from Lepidium virginicum (Virginia pepperweed).